Consider the following 322-residue polypeptide: Interferon regulatory factor 1 (322 aa).

Positions 5 to 113 form a DNA-binding region, IRF tryptophan pentad repeat; it reads RMRMRPWLEM…SAVRVYRMLP (109 aa). N6-acetyllysine is present on Lys78. The disordered stretch occupies residues 92–164; it reads EEVKDQSRNK…STLPDDHSNY (73 aa). The segment covering 146 to 157 has biased composition (polar residues); that stretch reads DTFSDGLSSSTL. Residues Lys276 and Lys296 each participate in a glycyl lysine isopeptide (Lys-Gly) (interchain with G-Cter in SUMO) cross-link.

Belongs to the IRF family. Monomer. Homodimer. Interacts with EP300. Interacts with MYD88. Interacts with PIAS3. Interacts with SPOP. Post-translationally, phosphorylated by CK2 and this positively regulates its activity. Sumoylation represses the transcriptional activity and displays enhanced resistance to protein degradation. Sumoylated by UBE2I/UBC9 and SUMO1. Inactivates the tumor suppressor activity. Elevated levels in tumor cells. Major site is Lys-276. Sumoylation is enhanced by PIAS3. Desumoylated by SENP1 in tumor cells and appears to compete with ubiquitination on C-terminal sites. In terms of processing, ubiquitinated in a SPOP-depedent manner. Appears to compete with sumoylation on C-terminal sites.

The protein resides in the nucleus. It is found in the cytoplasm. With respect to regulation, activated by MYD88. Its function is as follows. Transcriptional regulator which displays a remarkable functional diversity in the regulation of cellular responses. Regulates transcription of IFN and IFN-inducible genes, host response to viral and bacterial infections, regulation of many genes expressed during hematopoiesis, inflammation, immune responses and cell proliferation and differentiation, regulation of the cell cycle and induction of growth arrest and programmed cell death following DNA damage. Stimulates both innate and acquired immune responses through the activation of specific target genes and can act as a transcriptional activator and repressor regulating target genes by binding to an interferon-stimulated response element (ISRE) in their promoters. Has an essentail role in IFNG-dependent immunity to mycobacteria. Binds to a consensus sequence in gene promoters. Its target genes for transcriptional activation activity include: genes involved in anti-viral response, such as IFN-alpha/beta, RIGI, TNFSF10/TRAIL, ZBP1, OAS1/2, PIAS1/GBP, EIF2AK2/PKR and RSAD2/viperin; antibacterial response, such as GBP2, GBP5 and NOS2/INOS; anti-proliferative response, such as p53/TP53, LOX and CDKN1A; apoptosis, such as BBC3/PUMA, CASP1, CASP7 and CASP8; immune response, such as IL7, IL12A/B and IL15, PTGS2/COX2 and CYBB; DNA damage responses and DNA repair, such as POLQ/POLH; MHC class I expression, such as TAP1, PSMB9/LMP2, PSME1/PA28A, PSME2/PA28B and B2M and MHC class II expression, such as CIITA; metabolic enzymes, such as ACOD1/IRG1. Represses genes involved in anti-proliferative response, such as BIRC5/survivin, CCNB1, CCNE1, CDK1, CDK2 and CDK4 and in immune response, such as FOXP3, IL4, ANXA2 and TLR4. Stimulates p53/TP53-dependent transcription through enhanced recruitment of EP300 leading to increased acetylation of p53/TP53. Plays an important role in immune response directly affecting NK maturation and activity, macrophage production of IL12, Th1 development and maturation of CD8+ T-cells. Also implicated in the differentiation and maturation of dendritic cells and in the suppression of regulatory T (Treg) cells development. Acts as a tumor suppressor and plays a role not only in antagonism of tumor cell growth but also in stimulating an immune response against tumor cells. The chain is Interferon regulatory factor 1 (IRF1) from Bos taurus (Bovine).